Here is a 180-residue protein sequence, read N- to C-terminus: NADH-quinone oxidoreductase subunit I 1 (180 aa).

4Fe-4S ferredoxin-type domains are found at residues 50–80 (LSRDPDGEERCVACNLCAVACPVDCIALQKT) and 90–119 (EFFRINFSRCIFCGFCEEACPTYAIQLTPD). Cysteine 60, cysteine 63, cysteine 66, cysteine 70, cysteine 99, cysteine 102, cysteine 105, and cysteine 109 together coordinate [4Fe-4S] cluster.

This sequence belongs to the complex I 23 kDa subunit family. NDH-1 is composed of 14 different subunits. Subunits NuoA, H, J, K, L, M, N constitute the membrane sector of the complex. The cofactor is [4Fe-4S] cluster.

The protein localises to the cell inner membrane. It catalyses the reaction a quinone + NADH + 5 H(+)(in) = a quinol + NAD(+) + 4 H(+)(out). In terms of biological role, NDH-1 shuttles electrons from NADH, via FMN and iron-sulfur (Fe-S) centers, to quinones in the respiratory chain. The immediate electron acceptor for the enzyme in this species is believed to be ubiquinone. Couples the redox reaction to proton translocation (for every two electrons transferred, four hydrogen ions are translocated across the cytoplasmic membrane), and thus conserves the redox energy in a proton gradient. This is NADH-quinone oxidoreductase subunit I 1 from Nitrosococcus oceani (strain ATCC 19707 / BCRC 17464 / JCM 30415 / NCIMB 11848 / C-107).